The primary structure comprises 273 residues: MSFIEKLKNAWVSNNSLLCIGLDPDTEKFPDLFKTMAKPEAVFAFNKAIIDATHDLVCAYKPQIAYFSAEAAETSLEQTIAYIKTQYPHIPVILDAKRGDIGSTAQKYAAEAFERYQADAVTVNPYLGLDSITPFTAYRERGTILLCRTSNSGAADLQDLSVDGIPLYQKVAITARDHWNSHNNCLLVVGATWPEQMAAIRQLVGDMPFLVPGVGAQGGDVNAMVKAGKTADGNGLIISSSRAVLYASNGDDFAQAARAVALSLRQQINVARA.

K97 (proton donor) is an active-site residue.

The protein belongs to the OMP decarboxylase family. Type 2 subfamily.

It carries out the reaction orotidine 5'-phosphate + H(+) = UMP + CO2. It participates in pyrimidine metabolism; UMP biosynthesis via de novo pathway; UMP from orotate: step 2/2. The polypeptide is Orotidine 5'-phosphate decarboxylase (Cellvibrio japonicus (strain Ueda107) (Pseudomonas fluorescens subsp. cellulosa)).